The sequence spans 433 residues: L-2-hydroxyglutarate dehydrogenase, mitochondrial (433 aa).

Belongs to the L2HGDH family. It depends on FAD as a cofactor.

It localises to the mitochondrion. It carries out the reaction (S)-2-hydroxyglutarate + A = 2-oxoglutarate + AH2. The protein is L-2-hydroxyglutarate dehydrogenase, mitochondrial of Caenorhabditis elegans.